The following is an 81-amino-acid chain: U-megalopygitoxin(3)-Mo4 (81 aa).

The N-terminal stretch at 1–20 (MNSKFVLIVVFLAVVSICFA) is a signal peptide.

It belongs to the caterpillar 3 family. Post-translationally, contains 3 disulfide bonds. Expressed by the venom apparatus.

It localises to the secreted. In terms of biological role, probable toxin. This chain is U-megalopygitoxin(3)-Mo4, found in Megalopyge opercularis (Southern flannel moth).